A 125-amino-acid chain; its full sequence is Phosphoribosyl-AMP cyclohydrolase (125 aa).

D74 is a binding site for Mg(2+). C75 is a Zn(2+) binding site. 2 residues coordinate Mg(2+): D76 and D78. C92 and C99 together coordinate Zn(2+).

This sequence belongs to the PRA-CH family. In terms of assembly, homodimer. Mg(2+) serves as cofactor. It depends on Zn(2+) as a cofactor.

It is found in the cytoplasm. It carries out the reaction 1-(5-phospho-beta-D-ribosyl)-5'-AMP + H2O = 1-(5-phospho-beta-D-ribosyl)-5-[(5-phospho-beta-D-ribosylamino)methylideneamino]imidazole-4-carboxamide. Its pathway is amino-acid biosynthesis; L-histidine biosynthesis; L-histidine from 5-phospho-alpha-D-ribose 1-diphosphate: step 3/9. Its function is as follows. Catalyzes the hydrolysis of the adenine ring of phosphoribosyl-AMP. This Geobacter sulfurreducens (strain ATCC 51573 / DSM 12127 / PCA) protein is Phosphoribosyl-AMP cyclohydrolase.